We begin with the raw amino-acid sequence, 687 residues long: DNA-directed RNA polymerase subunit beta' (687 aa).

Residues Cys69, Cys71, Cys87, and Cys90 each contribute to the Zn(2+) site. Residues Asp495, Asp497, and Asp499 each contribute to the Mg(2+) site.

This sequence belongs to the RNA polymerase beta' chain family. RpoC1 subfamily. In plastids the minimal PEP RNA polymerase catalytic core is composed of four subunits: alpha, beta, beta', and beta''. When a (nuclear-encoded) sigma factor is associated with the core the holoenzyme is formed, which can initiate transcription. It depends on Mg(2+) as a cofactor. Requires Zn(2+) as cofactor.

The protein resides in the plastid. Its subcellular location is the chloroplast. It carries out the reaction RNA(n) + a ribonucleoside 5'-triphosphate = RNA(n+1) + diphosphate. DNA-dependent RNA polymerase catalyzes the transcription of DNA into RNA using the four ribonucleoside triphosphates as substrates. In Solanum tuberosum (Potato), this protein is DNA-directed RNA polymerase subunit beta'.